A 215-amino-acid polypeptide reads, in one-letter code: Pyrrolidone-carboxylate peptidase (215 aa).

Catalysis depends on residues E80, C143, and H167.

The protein belongs to the peptidase C15 family. In terms of assembly, homotetramer.

Its subcellular location is the cytoplasm. The catalysed reaction is Release of an N-terminal pyroglutamyl group from a polypeptide, the second amino acid generally not being Pro.. Functionally, removes 5-oxoproline from various penultimate amino acid residues except L-proline. The protein is Pyrrolidone-carboxylate peptidase of Bacillus mycoides (strain KBAB4) (Bacillus weihenstephanensis).